We begin with the raw amino-acid sequence, 202 residues long: uncharacterized protein (202 aa).

The START domain occupies methionine 1–arginine 202.

Its function is as follows. May play a role in the interaction of the bacterium with animal cells. This is an uncharacterized protein from Pseudomonas aeruginosa (strain ATCC 15692 / DSM 22644 / CIP 104116 / JCM 14847 / LMG 12228 / 1C / PRS 101 / PAO1).